A 158-amino-acid chain; its full sequence is NAD(P)H-quinone oxidoreductase subunit J, chloroplastic (158 aa).

This sequence belongs to the complex I 30 kDa subunit family. NDH is composed of at least 16 different subunits, 5 of which are encoded in the nucleus.

Its subcellular location is the plastid. It localises to the chloroplast thylakoid membrane. It catalyses the reaction a plastoquinone + NADH + (n+1) H(+)(in) = a plastoquinol + NAD(+) + n H(+)(out). The enzyme catalyses a plastoquinone + NADPH + (n+1) H(+)(in) = a plastoquinol + NADP(+) + n H(+)(out). Its function is as follows. NDH shuttles electrons from NAD(P)H:plastoquinone, via FMN and iron-sulfur (Fe-S) centers, to quinones in the photosynthetic chain and possibly in a chloroplast respiratory chain. The immediate electron acceptor for the enzyme in this species is believed to be plastoquinone. Couples the redox reaction to proton translocation, and thus conserves the redox energy in a proton gradient. The polypeptide is NAD(P)H-quinone oxidoreductase subunit J, chloroplastic (Chloranthus spicatus (Chulantree)).